Consider the following 594-residue polypeptide: NADH-quinone oxidoreductase subunit C/D (594 aa).

The NADH dehydrogenase I subunit C stretch occupies residues 1–185 (MTTGSALYIP…DPFSLNLAKQ (185 aa)). The segment at 209-594 (DYMFLNLGPN…IDFVMADVDR (386 aa)) is NADH dehydrogenase I subunit D.

In the N-terminal section; belongs to the complex I 30 kDa subunit family. It in the C-terminal section; belongs to the complex I 49 kDa subunit family. NDH-1 is composed of 13 different subunits. Subunits NuoB, CD, E, F, and G constitute the peripheral sector of the complex.

The protein localises to the cell inner membrane. The catalysed reaction is a quinone + NADH + 5 H(+)(in) = a quinol + NAD(+) + 4 H(+)(out). NDH-1 shuttles electrons from NADH, via FMN and iron-sulfur (Fe-S) centers, to quinones in the respiratory chain. The immediate electron acceptor for the enzyme in this species is believed to be ubiquinone. Couples the redox reaction to proton translocation (for every two electrons transferred, four hydrogen ions are translocated across the cytoplasmic membrane), and thus conserves the redox energy in a proton gradient. The chain is NADH-quinone oxidoreductase subunit C/D from Pseudomonas fluorescens (strain Pf0-1).